Here is a 346-residue protein sequence, read N- to C-terminus: Small ribosomal subunit biogenesis GTPase RsgA 2 (346 aa).

Residues 93 to 248 (EEQLIAANFD…VIDTPGMREF (156 aa)) form the CP-type G domain. Residues 138–141 (TKAD) and 190–198 (GSSGVGKSS) contribute to the GTP site. Residues Cys-271, Cys-276, His-278, and Cys-284 each coordinate Zn(2+).

Belongs to the TRAFAC class YlqF/YawG GTPase family. RsgA subfamily. Monomer. Associates with 30S ribosomal subunit, binds 16S rRNA. Requires Zn(2+) as cofactor.

It localises to the cytoplasm. One of several proteins that assist in the late maturation steps of the functional core of the 30S ribosomal subunit. Helps release RbfA from mature subunits. May play a role in the assembly of ribosomal proteins into the subunit. Circularly permuted GTPase that catalyzes slow GTP hydrolysis, GTPase activity is stimulated by the 30S ribosomal subunit. The protein is Small ribosomal subunit biogenesis GTPase RsgA 2 of Listeria monocytogenes serotype 4b (strain F2365).